Here is a 238-residue protein sequence, read N- to C-terminus: uncharacterized protein (238 aa).

A run of 4 helical transmembrane segments spans residues 16 to 36 (HLII…IGLE), 44 to 64 (VGVK…IVSI), 81 to 101 (PMRL…GVIL), and 123 to 143 (IGIA…VMIL).

This sequence belongs to the MgtC/SapB family.

The protein resides in the cell inner membrane. This is an uncharacterized protein from Haemophilus influenzae (strain ATCC 51907 / DSM 11121 / KW20 / Rd).